We begin with the raw amino-acid sequence, 367 residues long: MGTPPGLQTDCEALLSRFQETDSVRFEAFTELWRNMKFGTIFCGRMRNLEKNMFTKEALALAWRYFLPPYTFQIRVGALYLLYGLYNTQLCQPKQKIRVALKDWDEVLKFQQDLVNAQHFDAAYIFRKLRLDRAFHFTAMPKLLSYRMKKKIHRAEVTEEFKDPSDRVMKLITSDVLEEMLNVHDHYQNMKRVISVDKSKPDKALSLIKDDFFDNIKNIVLEHQQWHKDRKNPSLKSKINDGEEKMEGNSQETERCERAESLAKIKSKAFSVVIQASKSRRHRQVKLDSSDCDSASGQGQVKATRKKEKKERLKPAGRKMSFRNKGNVQNIHKEDKPLSLSMPVITEEENESLSGTEFTASKKKRKH.

An SNAPC3-binding region spans residues 1–168; that stretch reads MGTPPGLQTD…EEFKDPSDRV (168 aa). The SNAPC4-binding stretch occupies residues 164–268; that stretch reads PSDRVMKLIT…AESLAKIKSK (105 aa). Disordered regions lie at residues 228-254 and 278-367; these read KDRK…QETE and KSRR…KRKH. Basic and acidic residues predominate over residues 238–254; the sequence is KINDGEEKMEGNSQETE. Phosphoserine is present on residues serine 289 and serine 290. The span at 292 to 301 shows a compositional bias: polar residues; sequence CDSASGQGQV.

Part of the SNAPc complex composed of 5 subunits: SNAPC1, SNAPC2, SNAPC3, SNAPC4 and SNAPC5. SNAPC1 interacts with SNAPC3, SNAPC4 and TBP.

It localises to the nucleus. Part of the SNAPc complex required for the transcription of both RNA polymerase II and III small-nuclear RNA genes. Binds to the proximal sequence element (PSE), a non-TATA-box basal promoter element common to these 2 types of genes. Recruits TBP and BRF2 to the U6 snRNA TATA box. In Macaca fascicularis (Crab-eating macaque), this protein is snRNA-activating protein complex subunit 1 (SNAPC1).